We begin with the raw amino-acid sequence, 304 residues long: tRNA pseudouridine synthase B (304 aa).

D38 serves as the catalytic Nucleophile.

Belongs to the pseudouridine synthase TruB family. Type 1 subfamily.

The enzyme catalyses uridine(55) in tRNA = pseudouridine(55) in tRNA. Its function is as follows. Responsible for synthesis of pseudouridine from uracil-55 in the psi GC loop of transfer RNAs. The polypeptide is tRNA pseudouridine synthase B (Listeria monocytogenes serotype 4b (strain F2365)).